A 34-amino-acid chain; its full sequence is MSDIN-like toxin proprotein 3 (34 aa).

Positions 1–10 are excised as a propeptide; it reads MSDINVIRAP. Residues 11-18 constitute a cross-link (cyclopeptide (Leu-Pro)); that stretch reads LLILSILP. Residues 19–34 constitute a propeptide that is removed on maturation; it reads CVGDDIEVLRRGEGLS.

It belongs to the MSDIN fungal toxin family. Post-translationally, processed by the macrocyclase-peptidase enzyme POPB to yield a toxic cyclic octapeptide. POPB first removes 10 residues from the N-terminus. Conformational trapping of the remaining peptide forces the enzyme to release this intermediate rather than proceed to macrocyclization. The enzyme rebinds the remaining peptide in a different conformation and catalyzes macrocyclization of the N-terminal 8 residues. As to expression, expressed in basidiocarps.

In terms of biological role, probable toxin that belongs to the MSDIN-like toxin family responsible for a large number of food poisoning cases and deaths. The polypeptide is MSDIN-like toxin proprotein 3 (Amanita exitialis (Guangzhou destroying angel)).